A 140-amino-acid polypeptide reads, in one-letter code: Inner membrane protein YphA (140 aa).

Topologically, residues 1–13 (MNTLRYFDFGAAR) are cytoplasmic. The helical transmembrane segment at 14-34 (PVLLLIARIAVVLIFIIFGFP) threads the bilayer. The Periplasmic portion of the chain corresponds to 35–56 (KMMGFDGTVQYMASLGAPMPML). The chain crosses the membrane as a helical span at residues 57–77 (AAIIAVVMEVPAAILIVLGFF). Residues 78 to 79 (TR) lie on the Cytoplasmic side of the membrane. A helical transmembrane segment spans residues 80 to 100 (PLAVLFIFYTLGTAVIGHHYW). The Periplasmic segment spans residues 101-116 (DMTGDAVGPNMINFWK). The helical transmembrane segment at 117-137 (NVSIAGAFLLLAITGPGAISL) threads the bilayer. Over 138 to 140 (DRR) the chain is Cytoplasmic.

This sequence belongs to the DoxX family.

The protein localises to the cell inner membrane. This Escherichia coli (strain K12) protein is Inner membrane protein YphA (yphA).